The sequence spans 160 residues: SsrA-binding protein (160 aa).

The protein belongs to the SmpB family.

The protein localises to the cytoplasm. Required for rescue of stalled ribosomes mediated by trans-translation. Binds to transfer-messenger RNA (tmRNA), required for stable association of tmRNA with ribosomes. tmRNA and SmpB together mimic tRNA shape, replacing the anticodon stem-loop with SmpB. tmRNA is encoded by the ssrA gene; the 2 termini fold to resemble tRNA(Ala) and it encodes a 'tag peptide', a short internal open reading frame. During trans-translation Ala-aminoacylated tmRNA acts like a tRNA, entering the A-site of stalled ribosomes, displacing the stalled mRNA. The ribosome then switches to translate the ORF on the tmRNA; the nascent peptide is terminated with the 'tag peptide' encoded by the tmRNA and targeted for degradation. The ribosome is freed to recommence translation, which seems to be the essential function of trans-translation. This chain is SsrA-binding protein, found in Mycobacterium leprae (strain Br4923).